The sequence spans 1492 residues: Condensin-2 complex subunit D3-L (1492 aa).

Residues 152-201 form a disordered region; that stretch reads WPRDPNASRKRKKDTLKSSQGDNRGGRKRPRPPRRDEQEMEDLSEEEQDE. The segment covering 189-201 has biased composition (acidic residues); the sequence is QEMEDLSEEEQDE. 3 HEAT repeats span residues 543-581, 583-619, and 621-659; these read SSDG…CHLI, CSSE…AQPH, and VLIQ…QSIT. Disordered regions lie at residues 1269–1345, 1359–1406, and 1454–1492; these read QLER…PRPR, RKAA…SLVG, and IMSP…KPSN. Polar residues predominate over residues 1277–1290; that stretch reads NVQNPPSAESTGSP. A compositionally biased stretch (low complexity) spans 1377-1388; sequence PSTPSPARTTSS.

As to quaternary structure, component of the condensin-2 complex, which contains the smc2 and smc4 heterodimer, and three non SMC subunits, ncapg2, ncaph2 and ncapd3 that probably regulate the complex.

Its subcellular location is the nucleus. Functionally, regulatory subunit of the condensin-2 complex, a complex which establishes mitotic chromosome architecture and is involved in physical rigidity of the chromatid axis. The polypeptide is Condensin-2 complex subunit D3-L (Xenopus laevis (African clawed frog)).